Reading from the N-terminus, the 286-residue chain is Polyamine aminopropyltransferase (286 aa).

Residues 6 to 239 form the PABS domain; it reads PVWIDEVFED…GWWSWLYASD (234 aa). Gln34 is a binding site for S-methyl-5'-thioadenosine. Spermidine is bound by residues His65 and Asp89. S-methyl-5'-thioadenosine-binding positions include Glu109 and 140–141; that span reads DG. Asp159 acts as the Proton acceptor in catalysis. Residue 159–162 participates in spermidine binding; that stretch reads DGSD. Pro166 provides a ligand contact to S-methyl-5'-thioadenosine.

It belongs to the spermidine/spermine synthase family. In terms of assembly, homodimer or homotetramer. Homodimer.

It is found in the cytoplasm. It catalyses the reaction S-adenosyl 3-(methylsulfanyl)propylamine + putrescine = S-methyl-5'-thioadenosine + spermidine + H(+). It participates in amine and polyamine biosynthesis; spermidine biosynthesis; spermidine from putrescine: step 1/1. Catalyzes the irreversible transfer of a propylamine group from the amino donor S-adenosylmethioninamine (decarboxy-AdoMet) to putrescine (1,4-diaminobutane) to yield spermidine. The protein is Polyamine aminopropyltransferase of Synechococcus elongatus (strain ATCC 33912 / PCC 7942 / FACHB-805) (Anacystis nidulans R2).